The primary structure comprises 291 residues: Probable peptide ABC transporter permease protein y4tQ (291 aa).

5 consecutive transmembrane segments (helical) span residues 28-48 (LVLLGGGILLLLILLALAAPL), 92-112 (LIVGLLSAVCAAVCGLLIGVI), 137-157 (LLAIALLSLTGPGIGILIVAI), 213-233 (ATVCASAIMTEAGLSFIGVGV), and 249-269 (LFLAIAPLTIFAPGLCLAVTV). The ABC transmembrane type-1 domain maps to 88-276 (ARISLIVGLL…VTVLAVNLLG (189 aa)).

The protein belongs to the binding-protein-dependent transport system permease family. OppBC subfamily.

It is found in the cell inner membrane. Functionally, probably part of the binding-protein-dependent transport system y4tOPQRS for a peptide. Probably responsible for the translocation of the substrate across the membrane. This is Probable peptide ABC transporter permease protein y4tQ from Sinorhizobium fredii (strain NBRC 101917 / NGR234).